We begin with the raw amino-acid sequence, 180 residues long: Large ribosomal subunit protein bL19 (180 aa).

This sequence belongs to the bacterial ribosomal protein bL19 family.

Functionally, this protein is located at the 30S-50S ribosomal subunit interface and may play a role in the structure and function of the aminoacyl-tRNA binding site. The polypeptide is Large ribosomal subunit protein bL19 (Allorhizobium ampelinum (strain ATCC BAA-846 / DSM 112012 / S4) (Agrobacterium vitis (strain S4))).